A 201-amino-acid chain; its full sequence is Small ribosomal subunit protein uS4 (201 aa).

An S4 RNA-binding domain is found at 93 to 155 (CRLDNIVYRM…SKSLSMFEVN (63 aa)).

It belongs to the universal ribosomal protein uS4 family. In terms of assembly, part of the 30S ribosomal subunit. Contacts protein S5. The interaction surface between S4 and S5 is involved in control of translational fidelity.

Its function is as follows. One of the primary rRNA binding proteins, it binds directly to 16S rRNA where it nucleates assembly of the body of the 30S subunit. With S5 and S12 plays an important role in translational accuracy. This Elusimicrobium minutum (strain Pei191) protein is Small ribosomal subunit protein uS4.